Reading from the N-terminus, the 90-residue chain is Probable Fe(2+)-trafficking protein (90 aa).

Belongs to the Fe(2+)-trafficking protein family.

Its function is as follows. Could be a mediator in iron transactions between iron acquisition and iron-requiring processes, such as synthesis and/or repair of Fe-S clusters in biosynthetic enzymes. The polypeptide is Probable Fe(2+)-trafficking protein (Laribacter hongkongensis (strain HLHK9)).